The chain runs to 530 residues: Chaperone Ric-8A (530 aa).

Ser-435 carries the post-translational modification Phosphoserine. Phosphothreonine is present on residues Thr-440 and Thr-442. 4 positions are modified to phosphoserine: Ser-501, Ser-522, Ser-523, and Ser-527.

This sequence belongs to the synembryn family. Interacts with GDP-bound G alpha proteins GNAI1, GNAO1 and GNAQ, and with GNA13 with lower affinity. Does not interact with G-alpha proteins when they are in complex with subunits beta and gamma. Interacts (via C-terminus) with RGS14; the interaction stimulates the dissociation of the complex between RGS14 and the active GTP-bound form of GNAI1. Interacts with NCS1; interaction is favored in the absence of Ca(2+) and myristoylation of NCS1 is not required. Post-translationally, phosphorylated at Ser-435 and Thr-440 by CK2, stabilizing its interface with G alpha proteins.

The protein localises to the cytoplasm. The protein resides in the cell cortex. In terms of biological role, chaperone that specifically binds and folds nascent G alpha proteins prior to G protein heterotrimer formation, promoting their stability and activity: folds GNAI1, GNAO1, GNA13 and GNAQ. Does not fold G(s) G-alpha proteins GNAS nor GNAL. Also acts as a guanine nucleotide exchange factor (GEF) for G alpha proteins by stimulating exchange of bound GDP for free GTP. Involved in regulation of microtubule pulling forces during mitotic movement of chromosomes by stimulating G(i)-alpha protein (GNAI1), possibly leading to release G(i)-alpha-GTP and NuMA proteins from the NuMA-GPSM2-G(i)-alpha-GDP complex. Also acts as an activator for G(q)-alpha (GNAQ) protein by enhancing the G(q)-coupled receptor-mediated ERK activation. The protein is Chaperone Ric-8A (RIC8A) of Macaca fascicularis (Crab-eating macaque).